Consider the following 479-residue polypeptide: MSPQTETKASVGFKAGVKEYKLTYYTPEYETKDTDILAAFRVTPQPGVPPEEAGAAVAAESSTGTWTTVWTDGLTSLDRYKGRCYHIEPVPGEETQFIAYVAYPLDLFEEGSVTNMFTSIVGNVFGFKALAALRLEDLRIPPAYTKTFQGPPHGIQVERDKLNKYGRPLLGCTIKPKLGLSAKNYGRAVYECLRGGLDFTKDDENVNSQPFMRWRDRFLFCAEAIYKSQAETGEIKGHYLNATAGTCEEMIKRAVFARELGVPIVMHDYLTGGFTANTSLSHYCRDNGLLLHIHRAMHAVIDRQKNHGMHFRVLAKALRLSGGDHVHAGTVVGKLEGDRESTLGFVDLLRDDYIEKDRSRGIFFTQDWVSLPGVLPVASGGIHVWHMPALTEIFGDDSVLQFGGGTLGHPWGNAPGAVANRVALEACVQARNEGRDLAVEGNEIIREACKWSPELAAACEVWKEIRFNFPTVDTLDDQA.

Residues 1–2 (MS) constitute a propeptide that is removed on maturation. Asn123 and Thr173 together coordinate substrate. The active-site Proton acceptor is Lys175. Lys177 provides a ligand contact to substrate. Mg(2+)-binding residues include Lys201, Asp203, and Glu204. At Lys201 the chain carries N6-carboxylysine. A Phosphoserine modification is found at Ser208. His294 (proton acceptor) is an active-site residue. Residues Arg295 and His327 each coordinate substrate. Thr330 carries the phosphothreonine modification. Ser379 lines the substrate pocket.

It belongs to the RuBisCO large chain family. Type I subfamily. As to quaternary structure, heterohexadecamer of 8 large chains and 8 small chains; disulfide-linked. The disulfide link is formed within the large subunit homodimers. It depends on Mg(2+) as a cofactor. In terms of processing, the disulfide bond which can form in the large chain dimeric partners within the hexadecamer appears to be associated with oxidative stress and protein turnover.

The protein resides in the plastid. The protein localises to the chloroplast. The catalysed reaction is 2 (2R)-3-phosphoglycerate + 2 H(+) = D-ribulose 1,5-bisphosphate + CO2 + H2O. The enzyme catalyses D-ribulose 1,5-bisphosphate + O2 = 2-phosphoglycolate + (2R)-3-phosphoglycerate + 2 H(+). Its function is as follows. RuBisCO catalyzes two reactions: the carboxylation of D-ribulose 1,5-bisphosphate, the primary event in carbon dioxide fixation, as well as the oxidative fragmentation of the pentose substrate in the photorespiration process. Both reactions occur simultaneously and in competition at the same active site. This is Ribulose bisphosphate carboxylase large chain from Olimarabidopsis pumila (Dwarf rocket).